Reading from the N-terminus, the 555-residue chain is Dihydroxy-acid dehydratase (555 aa).

Mg(2+) is bound at residue Asp80. Cys121 contributes to the [2Fe-2S] cluster binding site. Residues Asp122 and Lys123 each coordinate Mg(2+). Position 123 is an N6-carboxylysine (Lys123). Cys193 lines the [2Fe-2S] cluster pocket. Glu444 provides a ligand contact to Mg(2+). Residue Ser470 is the Proton acceptor of the active site.

Belongs to the IlvD/Edd family. In terms of assembly, homodimer. It depends on [2Fe-2S] cluster as a cofactor. Mg(2+) serves as cofactor.

The catalysed reaction is (2R)-2,3-dihydroxy-3-methylbutanoate = 3-methyl-2-oxobutanoate + H2O. The enzyme catalyses (2R,3R)-2,3-dihydroxy-3-methylpentanoate = (S)-3-methyl-2-oxopentanoate + H2O. It participates in amino-acid biosynthesis; L-isoleucine biosynthesis; L-isoleucine from 2-oxobutanoate: step 3/4. Its pathway is amino-acid biosynthesis; L-valine biosynthesis; L-valine from pyruvate: step 3/4. Functions in the biosynthesis of branched-chain amino acids. Catalyzes the dehydration of (2R,3R)-2,3-dihydroxy-3-methylpentanoate (2,3-dihydroxy-3-methylvalerate) into 2-oxo-3-methylpentanoate (2-oxo-3-methylvalerate) and of (2R)-2,3-dihydroxy-3-methylbutanoate (2,3-dihydroxyisovalerate) into 2-oxo-3-methylbutanoate (2-oxoisovalerate), the penultimate precursor to L-isoleucine and L-valine, respectively. This Aquifex aeolicus (strain VF5) protein is Dihydroxy-acid dehydratase.